We begin with the raw amino-acid sequence, 449 residues long: MDPGQRPNPFGAPGAIPKKPCLSQGSPGTSGSGAPCDEPSRSESPGEGPSGTGGSAAAGDITRQAVVAAITEWSRTRQLRISTGASEGKASIKDWIVCQVNSGKFPGVEWEDEERTRFRIPVTPLADPCFEWRRDGELGVVYIRERGNMPVDASFKGTRGRRRMLAALRRTRGLQEIGKGISQDGHHFLVFRVRKPEEEQCVECGVVAGAVHDFNNMARLLQEGFFSPGQCLPGEIVTPVPSCTTAEGQEAVIDWGRLFIRMYYNGEQVHELLTTSQSGCRISSALRRDPAVHYCAVGSPGQVWLPNVPNLACEIAKRELCDTLDACAKGILLTSSCNGIFCVCYHNGPVHFIGNTVPPDSGPLLLPQGKPTRIFNPNTFLVGLANSPLPAPSHVTCPLVKLWLGKPVAVGKLEPHAPSPRDFAARCSNFSDACVVLEIMPKPLWDAMQ.

Residues 1 to 60 form a disordered region; that stretch reads MDPGQRPNPFGAPGAIPKKPCLSQGSPGTSGSGAPCDEPSRSESPGEGPSGTGGSAAAGD. The segment at residues 89–195 is a DNA-binding region (IRF tryptophan pentad repeat); that stretch reads KASIKDWIVC…HHFLVFRVRK (107 aa). N6-propionyllysine; by host is present on residues lysine 406 and lysine 442.

Belongs to the IRF family. As to quaternary structure, forms homodimers. Interacts with host IRF3, IRF7, and CREBBP. Interacts with host SYNCRIP. Interacts with host USP7. Interacts (via C-terminus) with host HERC5. Interacts with host GABARAPL1. Interacts with host SIRT6. Post-translationally, ISGylated. Propionylated in lysine residues Lys-406 and Lys-442, which is required for effective inhibition of IFN-beta production and antiviral signaling.

It localises to the host cytoplasm. Plays a role in the inhibition of host innate response by repressing the expression of interferon-inducible genes and blocking host IRF1- and IRF3-mediated transcription. Blocks the interaction between host IRF3 and CREBBP. Regulates the host cellular metabolism by increasing glucose uptake, ATP production and lactate secretion through down-regulation of heterogeneous nuclear ribonuclear protein Q1/SYNCRIP. Mechanistically, induces ubiquitination and degradation of SYNCRIP through the ubiquitin-proteasome pathway by recruiting KLHL3/CUL3 ubiquitin ligase complex. Disrupts host TP53 signaling pathway during viral infection by interacting with host USP7 and thereby decreasing the availability of USP7 for deubiquitinating and stabilizing TP53. Plays a role in the global inhibition of protein ISGylation by interacting with host HERC5 leading to its inhibition. Promotes its own propionylation by blocking SIRT6 interaction with ubiquitin-specific peptidase 10/USP10 leading to SIRT6 degradation via a ubiquitin-proteasome pathway. In turn, propionylation is required to block IRF3-CBP/p300 recruitment and to repress the STING DNA sensing pathway. Plays a role in the activation of mitophagy during infection via interaction with the host proteins NIX/BNIP3L, TUFM and GABARAPL1 thereby inhibiting antiviral responses and contributing to productive replication. This is VIRF-1 (vIRF-1) from Homo sapiens (Human).